Consider the following 140-residue polypeptide: Small ribosomal subunit protein bS6 (140 aa).

Residues 111–140 (EHFTGPAGAEGSDDESTESTDEAVAETADA) form a disordered region. Positions 121 to 140 (GSDDESTESTDEAVAETADA) are enriched in acidic residues.

Belongs to the bacterial ribosomal protein bS6 family.

In terms of biological role, binds together with bS18 to 16S ribosomal RNA. The chain is Small ribosomal subunit protein bS6 from Rhodopirellula baltica (strain DSM 10527 / NCIMB 13988 / SH1).